We begin with the raw amino-acid sequence, 216 residues long: N-(5'-phosphoribosyl)anthranilate isomerase (216 aa).

The protein belongs to the TrpF family.

The enzyme catalyses N-(5-phospho-beta-D-ribosyl)anthranilate = 1-(2-carboxyphenylamino)-1-deoxy-D-ribulose 5-phosphate. Its pathway is amino-acid biosynthesis; L-tryptophan biosynthesis; L-tryptophan from chorismate: step 3/5. This chain is N-(5'-phosphoribosyl)anthranilate isomerase, found in Leptospira borgpetersenii serovar Hardjo-bovis (strain JB197).